The following is a 535-amino-acid chain: CTP synthase (535 aa).

An amidoligase domain region spans residues 1-267; it reads MTKFIFVTGG…DDIVIKRLDL (267 aa). Ser13 lines the CTP pocket. Residue Ser13 coordinates UTP. An ATP-binding site is contributed by 14-19; sequence SLGKGI. Tyr54 contributes to the L-glutamine binding site. Residue Asp71 coordinates ATP. Residues Asp71 and Glu141 each coordinate Mg(2+). CTP-binding positions include 148–150, 188–193, and Lys224; these read DIE and KTKPTQ. UTP contacts are provided by residues 188-193 and Lys224; that span reads KTKPTQ. Residue 240-242 coordinates ATP; sequence RDA. Residues 293-535 form the Glutamine amidotransferase type-1 domain; the sequence is TIGLVGKYVS…VEAAYKHQNK (243 aa). An L-glutamine-binding site is contributed by Gly355. The active-site Nucleophile; for glutamine hydrolysis is Cys382. L-glutamine is bound by residues 383–386, Glu406, and Arg463; that span reads LGMQ. Active-site residues include His508 and Glu510.

Belongs to the CTP synthase family. As to quaternary structure, homotetramer.

The enzyme catalyses UTP + L-glutamine + ATP + H2O = CTP + L-glutamate + ADP + phosphate + 2 H(+). It catalyses the reaction L-glutamine + H2O = L-glutamate + NH4(+). It carries out the reaction UTP + NH4(+) + ATP = CTP + ADP + phosphate + 2 H(+). It participates in pyrimidine metabolism; CTP biosynthesis via de novo pathway; CTP from UDP: step 2/2. Allosterically activated by GTP, when glutamine is the substrate; GTP has no effect on the reaction when ammonia is the substrate. The allosteric effector GTP functions by stabilizing the protein conformation that binds the tetrahedral intermediate(s) formed during glutamine hydrolysis. Inhibited by the product CTP, via allosteric rather than competitive inhibition. Functionally, catalyzes the ATP-dependent amination of UTP to CTP with either L-glutamine or ammonia as the source of nitrogen. Regulates intracellular CTP levels through interactions with the four ribonucleotide triphosphates. The chain is CTP synthase from Staphylococcus haemolyticus (strain JCSC1435).